The following is a 323-amino-acid chain: Beta-ketoacyl-[acyl-carrier-protein] synthase III (323 aa).

Catalysis depends on residues Cys-113 and His-250. Residues 251 to 255 are ACP-binding; sequence QANKR. Asn-280 is a catalytic residue.

This sequence belongs to the thiolase-like superfamily. FabH family. Homodimer.

It is found in the cytoplasm. The enzyme catalyses malonyl-[ACP] + acetyl-CoA + H(+) = 3-oxobutanoyl-[ACP] + CO2 + CoA. The protein operates within lipid metabolism; fatty acid biosynthesis. In terms of biological role, catalyzes the condensation reaction of fatty acid synthesis by the addition to an acyl acceptor of two carbons from malonyl-ACP. Catalyzes the first condensation reaction which initiates fatty acid synthesis and may therefore play a role in governing the total rate of fatty acid production. Possesses both acetoacetyl-ACP synthase and acetyl transacylase activities. Its substrate specificity determines the biosynthesis of branched-chain and/or straight-chain of fatty acids. This is Beta-ketoacyl-[acyl-carrier-protein] synthase III from Chelativorans sp. (strain BNC1).